We begin with the raw amino-acid sequence, 291 residues long: Small ribosomal subunit protein uS2 (291 aa).

The segment at 241–270 is disordered; it reads KREPRQINRPVMSSENQAEQQTSVANENVQ. Residues 251 to 270 show a composition bias toward polar residues; the sequence is VMSSENQAEQQTSVANENVQ.

It belongs to the universal ribosomal protein uS2 family.

The protein is Small ribosomal subunit protein uS2 of Mycoplasma capricolum subsp. capricolum (strain California kid / ATCC 27343 / NCTC 10154).